We begin with the raw amino-acid sequence, 359 residues long: Guanine nucleotide-binding protein subunit alpha-11 (359 aa).

2 S-palmitoyl cysteine lipidation sites follow: Cys9 and Cys10. A G-alpha domain is found at 38–359 (RELKLLLLGT…QHNLKEYNLV (322 aa)). Residues 41–54 (KLLLLGTGESGKST) are G1 motif. GTP is bound by residues 46–53 (GTGESGKS) and 180–183 (LRVR). Ser53 contacts Mg(2+). The interval 178 to 186 (DVLRVRVPT) is G2 motif. Position 186 (Thr186) interacts with Mg(2+). Residues 201 to 210 (FRMVDVGGQR) are G3 motif. The segment at 270 to 277 (ILFLNKKD) is G4 motif. GTP-binding positions include 274–277 (NKKD) and Ala331. Residues 329–334 (TCATDT) are G5 motif.

Belongs to the G-alpha family. G(q) subfamily. In terms of assembly, g proteins are composed of 3 units; alpha, beta and gamma. The alpha chain contains the guanine nucleotide binding site.

The protein resides in the cell membrane. It is found in the cytoplasm. The enzyme catalyses GTP + H2O = GDP + phosphate + H(+). In terms of biological role, guanine nucleotide-binding proteins (G proteins) function as transducers downstream of G protein-coupled receptors (GPCRs) in numerous signaling cascades. The alpha chain contains the guanine nucleotide binding site and alternates between an active, GTP-bound state and an inactive, GDP-bound state. Signaling by an activated GPCR promotes GDP release and GTP binding. The alpha subunit has a low GTPase activity that converts bound GTP to GDP, thereby terminating the signal. Both GDP release and GTP hydrolysis are modulated by numerous regulatory proteins. Signaling is mediated via phospholipase C-beta-dependent inositol lipid hydrolysis for signal propagation: activates phospholipase C-beta: following GPCR activation, GNA11 activates PLC-beta (PLCB1, PLCB2, PLCB3 or PLCB4), leading to production of diacylglycerol (DAG) and inositol 1,4,5-trisphosphate (IP3). This Xenopus laevis (African clawed frog) protein is Guanine nucleotide-binding protein subunit alpha-11 (gna11).